The sequence spans 224 residues: Adenylate kinase (224 aa).

Position 10–15 (G10–T15) interacts with ATP. The tract at residues E30–V59 is NMP. Residues S31, R36, D57–V59, G85–R88, and Q92 contribute to the AMP site. The LID stretch occupies residues G126–D165. R127 is a binding site for ATP. R162 and R174 together coordinate AMP. Position 211 (N211) interacts with ATP.

The protein belongs to the adenylate kinase family. Monomer.

It is found in the cytoplasm. The catalysed reaction is AMP + ATP = 2 ADP. It participates in purine metabolism; AMP biosynthesis via salvage pathway; AMP from ADP: step 1/1. Catalyzes the reversible transfer of the terminal phosphate group between ATP and AMP. Plays an important role in cellular energy homeostasis and in adenine nucleotide metabolism. The chain is Adenylate kinase from Desulforapulum autotrophicum (strain ATCC 43914 / DSM 3382 / VKM B-1955 / HRM2) (Desulfobacterium autotrophicum).